The primary structure comprises 125 residues: Large ribosomal subunit protein bL12 (125 aa).

The protein belongs to the bacterial ribosomal protein bL12 family. In terms of assembly, homodimer. Part of the ribosomal stalk of the 50S ribosomal subunit. Forms a multimeric L10(L12)X complex, where L10 forms an elongated spine to which 2 to 4 L12 dimers bind in a sequential fashion. Binds GTP-bound translation factors.

Forms part of the ribosomal stalk which helps the ribosome interact with GTP-bound translation factors. Is thus essential for accurate translation. The protein is Large ribosomal subunit protein bL12 of Thermoanaerobacter sp. (strain X514).